Consider the following 187-residue polypeptide: Ribosome-recycling factor (187 aa).

The protein belongs to the RRF family.

Its subcellular location is the cytoplasm. Its function is as follows. Responsible for the release of ribosomes from messenger RNA at the termination of protein biosynthesis. May increase the efficiency of translation by recycling ribosomes from one round of translation to another. This is Ribosome-recycling factor from Lactiplantibacillus plantarum (strain ATCC BAA-793 / NCIMB 8826 / WCFS1) (Lactobacillus plantarum).